We begin with the raw amino-acid sequence, 365 residues long: Caffeic acid 3-O-methyltransferase 1 (365 aa).

Residue 130–136 (MNQDKVL) participates in substrate binding. Positions 162-180 (AFEYHGTDPRFNKVFNKGM) are substrate binding. S-adenosyl-L-methionine is bound by residues Gly-208, Asp-231, Asp-251, Met-252, and Lys-265. Catalysis depends on His-269, which acts as the Proton acceptor.

This sequence belongs to the class I-like SAM-binding methyltransferase superfamily. Cation-independent O-methyltransferase family. COMT subfamily. As to quaternary structure, homodimer.

The catalysed reaction is (E)-caffeate + S-adenosyl-L-methionine = (E)-ferulate + S-adenosyl-L-homocysteine + H(+). Its pathway is aromatic compound metabolism; phenylpropanoid biosynthesis. Its function is as follows. Catalyzes the conversion of caffeic acid to ferulic acid and of 5-hydroxyferulic acid to sinapic acid. The resulting products may subsequently be converted to the corresponding alcohols that are incorporated into lignins. This Populus kitakamiensis (Aspen) protein is Caffeic acid 3-O-methyltransferase 1 (HOMT1).